We begin with the raw amino-acid sequence, 254 residues long: 14-3-3-like protein GF14 epsilon (254 aa).

Phosphoserine is present on residues S65 and S188.

Belongs to the 14-3-3 family. In terms of assembly, interacts with DREB1A and DREB1B in the nucleus. Interacts with CINV1.

The protein localises to the nucleus. It is found in the cytoplasm. Its function is as follows. Is associated with a DNA binding complex that binds to the G box, a well-characterized cis-acting DNA regulatory element found in plant genes. This Arabidopsis thaliana (Mouse-ear cress) protein is 14-3-3-like protein GF14 epsilon (GRF10).